The chain runs to 330 residues: Flotillin-like protein FloA (330 aa).

A run of 2 helical transmembrane segments spans residues Leu-6–Val-26 and Val-28–Gly-48.

The protein belongs to the flotillin-like FloA family. In terms of assembly, homooligomerizes.

Its subcellular location is the cell membrane. The protein resides in the membrane raft. Found in functional membrane microdomains (FMM) that may be equivalent to eukaryotic membrane rafts. FMMs are highly dynamic and increase in number as cells age. Flotillins are thought to be important factors in membrane fluidity. This chain is Flotillin-like protein FloA, found in Bacillus licheniformis (strain ATCC 14580 / DSM 13 / JCM 2505 / CCUG 7422 / NBRC 12200 / NCIMB 9375 / NCTC 10341 / NRRL NRS-1264 / Gibson 46).